We begin with the raw amino-acid sequence, 567 residues long: DNA ligase B (567 aa).

The N6-AMP-lysine intermediate role is filled by lysine 126.

Belongs to the NAD-dependent DNA ligase family. LigB subfamily.

It carries out the reaction NAD(+) + (deoxyribonucleotide)n-3'-hydroxyl + 5'-phospho-(deoxyribonucleotide)m = (deoxyribonucleotide)n+m + AMP + beta-nicotinamide D-nucleotide.. In terms of biological role, catalyzes the formation of phosphodiester linkages between 5'-phosphoryl and 3'-hydroxyl groups in double-stranded DNA using NAD as a coenzyme and as the energy source for the reaction. In Pseudomonas putida (strain W619), this protein is DNA ligase B.